The primary structure comprises 356 residues: Protein pelota homolog (356 aa).

This sequence belongs to the eukaryotic release factor 1 family. Pelota subfamily. In terms of assembly, monomer. The cofactor is a divalent metal cation.

The protein localises to the cytoplasm. In terms of biological role, may function in recognizing stalled ribosomes, interact with stem-loop structures in stalled mRNA molecules, and effect endonucleolytic cleavage of the mRNA. May play a role in the release non-functional ribosomes and degradation of damaged mRNAs. Has endoribonuclease activity. This chain is Protein pelota homolog, found in Pyrococcus abyssi (strain GE5 / Orsay).